We begin with the raw amino-acid sequence, 408 residues long: Peptidase T (408 aa).

The interval 1 to 28 (MKNQLIDRLTRYTTIDTQSDPKSTTTPS) is disordered. Over residues 11–28 (RYTTIDTQSDPKSTTTPS) the composition is skewed to polar residues. Histidine 78 is a Zn(2+) binding site. The active site involves aspartate 80. Aspartate 140 lines the Zn(2+) pocket. Glutamate 174 serves as the catalytic Proton acceptor. The Zn(2+) site is built by glutamate 175, aspartate 197, and histidine 379.

This sequence belongs to the peptidase M20B family. Zn(2+) serves as cofactor.

It localises to the cytoplasm. The catalysed reaction is Release of the N-terminal residue from a tripeptide.. In terms of biological role, cleaves the N-terminal amino acid of tripeptides. The protein is Peptidase T of Staphylococcus aureus (strain USA300 / TCH1516).